A 79-amino-acid chain; its full sequence is Alpha-elapitoxin-Aa2e (79 aa).

5 disulfides stabilise this stretch: cysteine 3/cysteine 20, cysteine 13/cysteine 41, cysteine 26/cysteine 30, cysteine 45/cysteine 56, and cysteine 57/cysteine 62.

Belongs to the three-finger toxin family. Long-chain subfamily. Type II alpha-neurotoxin sub-subfamily. In terms of tissue distribution, expressed by the venom gland.

Its subcellular location is the secreted. In terms of biological role, binds with high affinity to muscular (alpha-1/CHRNA1) and neuronal (alpha-7/CHRNA7) nicotinic acetylcholine receptor (nAChR) and inhibits acetylcholine from binding to the receptor, thereby impairing neuromuscular and neuronal transmission. Produces paralysis, clear dyspnea and lethality on mice. In Acanthophis antarcticus (Common death adder), this protein is Alpha-elapitoxin-Aa2e.